Here is a 206-residue protein sequence, read N- to C-terminus: Small ribosomal subunit protein uS5 (206 aa).

Residues 1–15 (MTDTPTKQEIQSKND) show a composition bias toward polar residues. Positions 1–50 (MTDTPTKQEIQSKNDNVPAATPVEQKKNNRNDRKRNRRGDSKNLERDSDW) are disordered. The segment covering 38–50 (RGDSKNLERDSDW) has biased composition (basic and acidic residues). In terms of domain architecture, S5 DRBM spans 50 to 113 (WQERVVQIRR…SDGKKNLVRV (64 aa)).

Belongs to the universal ribosomal protein uS5 family. As to quaternary structure, part of the 30S ribosomal subunit. Contacts proteins S4 and S8.

Functionally, with S4 and S12 plays an important role in translational accuracy. Located at the back of the 30S subunit body where it stabilizes the conformation of the head with respect to the body. This chain is Small ribosomal subunit protein uS5, found in Prochlorococcus marinus (strain AS9601).